Consider the following 355-residue polypeptide: Peptide chain release factor 1 (355 aa).

Gln-233 is modified (N5-methylglutamine).

The protein belongs to the prokaryotic/mitochondrial release factor family. Post-translationally, methylated by PrmC. Methylation increases the termination efficiency of RF1.

It localises to the cytoplasm. In terms of biological role, peptide chain release factor 1 directs the termination of translation in response to the peptide chain termination codons UAG and UAA. This chain is Peptide chain release factor 1, found in Clostridium tetani (strain Massachusetts / E88).